The chain runs to 298 residues: HTH-type transcriptional regulator ArgP (298 aa).

One can recognise an HTH lysR-type domain in the interval 4-60 (LDYRWIEALDSVVSKGSFERAAEQLFISQSAVSQRIKQLEKYLAQPVLIREQPPRPT). Positions 21–40 (FERAAEQLFISQSAVSQRIK) form a DNA-binding region, H-T-H motif.

Belongs to the LysR transcriptional regulatory family. Homodimer.

Functionally, controls the transcription of genes involved in arginine and lysine metabolism. This is HTH-type transcriptional regulator ArgP from Vibrio cholerae serotype O1 (strain ATCC 39315 / El Tor Inaba N16961).